A 144-amino-acid chain; its full sequence is Small ribosomal subunit protein eS19B (144 aa).

It belongs to the eukaryotic ribosomal protein eS19 family. As to quaternary structure, component of the small ribosomal subunit (SSU). Mature yeast ribosomes consist of a small (40S) and a large (60S) subunit. The 40S small subunit contains 1 molecule of ribosomal RNA (18S rRNA) and 33 different proteins (encoded by 57 genes). The large 60S subunit contains 3 rRNA molecules (25S, 5.8S and 5S rRNA) and 46 different proteins (encoded by 81 genes).

The protein localises to the cytoplasm. Its function is as follows. Component of the ribosome, a large ribonucleoprotein complex responsible for the synthesis of proteins in the cell. The small ribosomal subunit (SSU) binds messenger RNAs (mRNAs) and translates the encoded message by selecting cognate aminoacyl-transfer RNA (tRNA) molecules. The large subunit (LSU) contains the ribosomal catalytic site termed the peptidyl transferase center (PTC), which catalyzes the formation of peptide bonds, thereby polymerizing the amino acids delivered by tRNAs into a polypeptide chain. The nascent polypeptides leave the ribosome through a tunnel in the LSU and interact with protein factors that function in enzymatic processing, targeting, and the membrane insertion of nascent chains at the exit of the ribosomal tunnel. eS19 is required for proper maturation of the small (40S) ribosomal subunit. Binds to 40S pre-ribosomal particles, probably required after association of NOC4 but before association of ENP1, TSR1 and RIO2 with 20/21S pre-rRNA. In terms of biological role, required for proper maturation of the small (40S) ribosomal subunit. Binds to 40s pre-ribosomal particles, probably required after association of NOC4 but before association of ENP1, TSR1 and RIO2 with 20/21S pre-rRNA. This chain is Small ribosomal subunit protein eS19B, found in Saccharomyces cerevisiae (strain ATCC 204508 / S288c) (Baker's yeast).